The following is a 911-amino-acid chain: Alpha-actinin-4 (911 aa).

An actin-binding region spans residues 1–269; sequence MVDYHAANQS…YVSSFYHAFS (269 aa). The tract at residues 8–31 is disordered; it reads NQSYQYGPSSGSNGAGGGGTMGDY. The interaction with VCL stretch occupies residues 12–26; that stretch reads QYGPSSGSNGAGGGG. Position 31 is a phosphotyrosine (Tyr-31). Positions 40–61 are interaction with VCL; sequence RDLLLDPAWEKQQRKTFTAWCN. Calponin-homology (CH) domains are found at residues 50-154 and 163-269; these read KQQR…LRFA and TSAK…HAFS. Positions 84–88 match the LXXLL motif motif; it reads LMLLL. Residues 108-126 are interaction with VCL; it reads KINNVNKALDFIASKGVKL. Lys-114 carries the post-translational modification N6-acetyllysine. Residues 177 to 192 form a polyphosphoinositide (PIP2)-binding region; that stretch reads TAPYKNVNVQNFHISW. N6-acetyllysine is present on Lys-214. A Phosphothreonine modification is found at Thr-249. 4 Spectrin repeats span residues 293-403, 413-518, 528-639, and 649-752; these read HLME…WLLN, HLAE…ALEK, QLHL…ALLE, and HLRR…EVEN. Lys-592 and Lys-625 each carry N6-acetyllysine. Phosphoserine is present on Ser-696. The tract at residues 736 to 911 is mediates interaction with MICALL2; it reads WEQLLTTIAR…STALYGESDL (176 aa). EF-hand domains lie at 765–800 and 806–841; these read EQMQ…LGYD and QGDA…ETTD. Asp-778 contributes to the Ca(2+) binding site. At Lys-779 the chain carries N6-acetyllysine. Ca(2+) is bound by residues Asp-780 and Glu-789. Lys-859 is modified (N6-acetyllysine). Phosphoserine is present on Ser-909.

The protein belongs to the alpha-actinin family. In terms of assembly, homodimer; antiparallel. Identified in a IGF2BP1-dependent mRNP granule complex containing untranslated mRNAs. Component of the CART complex, at least composed of ACTN4, HGS/HRS, MYO5B and TRIM3. Binds TRIM3 at the N-terminus. Interacts with MAGI1. Interacts with PDLIM2. Identified in a complex with CASK, IQGAP1, MAGI2, NPHS1, SPTAN1 and SPTBN1. Interacts with MICALL2 (preferentially in opened conformation); stimulated by RAB13 activation. Interacts with PPARG and RARA. Binds to VCL; this interaction triggers VCL conformational changes. Interacts with SEPTIN14. Interacts with IGSF8.

The protein resides in the nucleus. It is found in the cytoplasm. The protein localises to the cell junction. Its subcellular location is the cytoskeleton. It localises to the stress fiber. The protein resides in the perinuclear region. Functionally, F-actin cross-linking protein which is thought to anchor actin to a variety of intracellular structures. This is a bundling protein. Probably involved in vesicular trafficking via its association with the CART complex. The CART complex is necessary for efficient transferrin receptor recycling but not for EGFR degradation. Involved in tight junction assembly in epithelial cells probably through interaction with MICALL2. Links MICALL2 to the actin cytoskeleton and recruits it to the tight junctions. May also function as a transcriptional coactivator, stimulating transcription mediated by the nuclear hormone receptors PPARG and RARA. Association with IGSF8 regulates the immune synapse formation and is required for efficient T-cell activation. This is Alpha-actinin-4 from Bos taurus (Bovine).